We begin with the raw amino-acid sequence, 373 residues long: tRNA-specific 2-thiouridylase MnmA (373 aa).

ATP is bound by residues 12–19 (GMSGGVDS) and Met-38. Residues 98–100 (NPD) form an interaction with target base in tRNA region. Cys-103 (nucleophile) is an active-site residue. A disulfide bond links Cys-103 and Cys-200. Position 127 (Gly-127) interacts with ATP. The tract at residues 150–152 (KDQ) is interaction with tRNA. The Cysteine persulfide intermediate role is filled by Cys-200. The tract at residues 312–313 (RY) is interaction with tRNA.

This sequence belongs to the MnmA/TRMU family.

The protein resides in the cytoplasm. The enzyme catalyses S-sulfanyl-L-cysteinyl-[protein] + uridine(34) in tRNA + AH2 + ATP = 2-thiouridine(34) in tRNA + L-cysteinyl-[protein] + A + AMP + diphosphate + H(+). Functionally, catalyzes the 2-thiolation of uridine at the wobble position (U34) of tRNA, leading to the formation of s(2)U34. The chain is tRNA-specific 2-thiouridylase MnmA from Streptococcus pyogenes serotype M12 (strain MGAS2096).